We begin with the raw amino-acid sequence, 262 residues long: tRNA pseudouridine synthase A (262 aa).

Catalysis depends on D56, which acts as the Nucleophile. Residue Y114 participates in substrate binding.

The protein belongs to the tRNA pseudouridine synthase TruA family. In terms of assembly, homodimer.

It catalyses the reaction uridine(38/39/40) in tRNA = pseudouridine(38/39/40) in tRNA. Functionally, formation of pseudouridine at positions 38, 39 and 40 in the anticodon stem and loop of transfer RNAs. This is tRNA pseudouridine synthase A from Lactiplantibacillus plantarum (strain ATCC BAA-793 / NCIMB 8826 / WCFS1) (Lactobacillus plantarum).